A 185-amino-acid chain; its full sequence is Threonylcarbamoyl-AMP synthase (185 aa).

A YrdC-like domain is found at 4–185 (SWRVQQAAQD…IATGQVMRAG (182 aa)).

This sequence belongs to the SUA5 family. TsaC subfamily.

It localises to the cytoplasm. It carries out the reaction L-threonine + hydrogencarbonate + ATP = L-threonylcarbamoyladenylate + diphosphate + H2O. Required for the formation of a threonylcarbamoyl group on adenosine at position 37 (t(6)A37) in tRNAs that read codons beginning with adenine. Catalyzes the conversion of L-threonine, HCO(3)(-)/CO(2) and ATP to give threonylcarbamoyl-AMP (TC-AMP) as the acyladenylate intermediate, with the release of diphosphate. In Pseudomonas savastanoi pv. phaseolicola (strain 1448A / Race 6) (Pseudomonas syringae pv. phaseolicola (strain 1448A / Race 6)), this protein is Threonylcarbamoyl-AMP synthase.